A 456-amino-acid chain; its full sequence is Bifunctional protein GlmU (456 aa).

The pyrophosphorylase stretch occupies residues 1 to 229; that stretch reads MLNSAMSVVI…ISETDGVNNR (229 aa). UDP-N-acetyl-alpha-D-glucosamine-binding positions include 11 to 14, lysine 25, glutamine 76, 81 to 82, 103 to 105, glycine 140, glutamate 154, asparagine 169, and asparagine 227; these read LAAG, GT, and YGD. Position 105 (aspartate 105) interacts with Mg(2+). Asparagine 227 provides a ligand contact to Mg(2+). Residues 230 to 250 are linker; the sequence is LQLSRLERIYQAEQAEKLLLS. Positions 251 to 456 are N-acetyltransferase; that stretch reads GVMLRDPARF…QGWQRPVKKK (206 aa). 2 residues coordinate UDP-N-acetyl-alpha-D-glucosamine: arginine 333 and lysine 351. Histidine 363 acts as the Proton acceptor in catalysis. UDP-N-acetyl-alpha-D-glucosamine contacts are provided by tyrosine 366 and asparagine 377. Residues alanine 380, 386–387, serine 405, alanine 423, and arginine 440 each bind acetyl-CoA; that span reads NY.

It in the N-terminal section; belongs to the N-acetylglucosamine-1-phosphate uridyltransferase family. In the C-terminal section; belongs to the transferase hexapeptide repeat family. Homotrimer. Mg(2+) is required as a cofactor.

The protein resides in the cytoplasm. The enzyme catalyses alpha-D-glucosamine 1-phosphate + acetyl-CoA = N-acetyl-alpha-D-glucosamine 1-phosphate + CoA + H(+). It carries out the reaction N-acetyl-alpha-D-glucosamine 1-phosphate + UTP + H(+) = UDP-N-acetyl-alpha-D-glucosamine + diphosphate. The protein operates within nucleotide-sugar biosynthesis; UDP-N-acetyl-alpha-D-glucosamine biosynthesis; N-acetyl-alpha-D-glucosamine 1-phosphate from alpha-D-glucosamine 6-phosphate (route II): step 2/2. It functions in the pathway nucleotide-sugar biosynthesis; UDP-N-acetyl-alpha-D-glucosamine biosynthesis; UDP-N-acetyl-alpha-D-glucosamine from N-acetyl-alpha-D-glucosamine 1-phosphate: step 1/1. It participates in bacterial outer membrane biogenesis; LPS lipid A biosynthesis. Functionally, catalyzes the last two sequential reactions in the de novo biosynthetic pathway for UDP-N-acetylglucosamine (UDP-GlcNAc). The C-terminal domain catalyzes the transfer of acetyl group from acetyl coenzyme A to glucosamine-1-phosphate (GlcN-1-P) to produce N-acetylglucosamine-1-phosphate (GlcNAc-1-P), which is converted into UDP-GlcNAc by the transfer of uridine 5-monophosphate (from uridine 5-triphosphate), a reaction catalyzed by the N-terminal domain. In Salmonella schwarzengrund (strain CVM19633), this protein is Bifunctional protein GlmU.